A 1365-amino-acid chain; its full sequence is Histone-lysine N-methyltransferase NSD2 (1365 aa).

Phosphothreonine is present on residues Thr-110 and Thr-114. The residue at position 121 (Ser-121) is a Phosphoserine. The segment at 149-170 (ADVSQSEENGQKPENKARRNRK) is disordered. Ser-172 carries the post-translational modification Phosphoserine. One can recognise a PWWP 1 domain in the interval 222–286 (VGDLVWSKVS…FEKSLVAFEG (65 aa)). A Phosphoserine modification is found at Ser-376. Disordered stretches follow at residues 376 to 455 (SSGV…RKGD) and 516 to 658 (EDSG…SKKS). Residue Thr-422 is modified to Phosphothreonine. A DNA-binding region (HMG box) is located at residues 453 to 521 (KGDAASQFLV…VQAEEDSGNV (69 aa)). Thr-544 is subject to Phosphothreonine. The span at 552-567 (DKHSLRKRDTITDKTA) shows a compositional bias: basic and acidic residues. Polar residues predominate over residues 580 to 590 (SLKSQAATKNL). Over residues 606–622 (AASSALGFSKSSSPSAS) the composition is skewed to low complexity. Ser-614 carries the phosphoserine modification. Over residues 632 to 648 (PGDEPSESPYESADETQ) the composition is skewed to acidic residues. 3 consecutive PHD-type zinc fingers follow at residues 667 to 713 (EYVC…CASG), 714 to 770 (IHSC…CHAS), and 831 to 875 (VSWC…CRAG). Residues 880–942 (FQDIIWVKLG…QARVFPYMEG (63 aa)) form the PWWP 2 domain. Positions 1011-1061 (SEIPKCNCKPTDENPCGFDSECLNRMLMFECHPQVCPAGEFCQNQCFTKRQ) constitute an AWS domain. Cys-1016, Cys-1018, Cys-1026, Cys-1032, Cys-1041, Cys-1046, and Cys-1052 together coordinate Zn(2+). In terms of domain architecture, SET spans 1063–1180 (PETKIIKTDG…AGTELTFNYN (118 aa)). Residues Trp-1075, 1115 to 1118 (THFY), and 1141 to 1142 (NH) contribute to the S-adenosyl-L-methionine site. Cys-1144 provides a ligand contact to Zn(2+). Asn-1186 provides a ligand contact to S-adenosyl-L-methionine. In terms of domain architecture, Post-SET spans 1187 to 1203 (EKTVCRCGASNCSGFLG). Residue Cys-1191 participates in Zn(2+) binding. S-adenosyl-L-methionine is bound at residue Arg-1192. Zn(2+) contacts are provided by Cys-1193 and Cys-1198. Residues 1207–1232 (KTSTTLSSEEKGKKTKKKTRRRRAKG) are disordered. Basic residues predominate over residues 1219–1230 (KKTKKKTRRRRA). The PHD-type 4; atypical zinc finger occupies 1239–1286 (EDECFRCGDGGQLVLCDRKFCTKAYHLSCLGLGKRPFGKWECPWHHCD). Residues 1333–1365 (VRSTKTEKPPPEPGKPKGKRRRRRGWRRVTEGK) are disordered. Positions 1348–1359 (PKGKRRRRRGWR) are enriched in basic residues.

The protein belongs to the class V-like SAM-binding methyltransferase superfamily. Histone-lysine methyltransferase family. SET2 subfamily. As to quaternary structure, interacts with HDAC1. Interacts (via PHD-type zinc fingers 1, 2 and 3) with SALL1. Interacts (via PHD-type 1, 2 and 3) with SALL4. Interacts with NANOG. Interacts with OGT. Interacts (via HMG box) with NKX2-5. As to expression, widely expressed. Predominantly expressed in thymus and testis.

The protein resides in the nucleus. The protein localises to the chromosome. Its subcellular location is the cytoplasm. It localises to the nucleolus. It carries out the reaction L-lysyl(36)-[histone H3] + S-adenosyl-L-methionine = N(6)-methyl-L-lysyl(36)-[histone H3] + S-adenosyl-L-homocysteine + H(+). It catalyses the reaction L-lysyl(36)-[histone H3] + 2 S-adenosyl-L-methionine = N(6),N(6)-dimethyl-L-lysyl(36)-[histone H3] + 2 S-adenosyl-L-homocysteine + 2 H(+). In terms of biological role, histone methyltransferase which specifically dimethylates nucleosomal histone H3 at 'Lys-36' (H3K36me2). Also monomethylates nucleosomal histone H3 at 'Lys-36' (H3K36me) in vitro. Does not trimethylate nucleosomal histone H3 at 'Lys-36' (H3K36me3). However, specifically trimethylates histone H3 at 'Lys-36' (H3K36me3) at euchromatic regions in embryonic stem (ES) cells. By methylating histone H3 at 'Lys-36', involved in the regulation of gene transcription during various biological processes. In ES cells, associates with developmental transcription factors such as SALL1 and represses inappropriate gene transcription mediated by histone deacetylation. During heart development, associates with transcription factor NKX2-5 to repress transcription of NKX2-5 target genes. Plays an essential role in adipogenesis, by regulating expression of genes involved in pre-adipocyte differentiation. During T-cell receptor (TCR) and CD28-mediated T-cell activation, promotes the transcription of transcription factor BCL6 which is required for follicular helper T (Tfh) cell differentiation. During B-cell development, required for the generation of the B1 lineage. During B2 cell activation, may contribute to the control of isotype class switch recombination (CRS), splenic germinal center formation, and the humoral immune response. Plays a role in class switch recombination of the immunoglobulin heavy chain (IgH) locus during B-cell activation. By regulating the methylation of histone H3 at 'Lys-36' and histone H4 at 'Lys-20' at the IgH locus, involved in TP53BP1 recruitment to the IgH switch region and promotes the transcription of IgA. Its function is as follows. Histone methyltransferase which specifically dimethylates nucleosomal histone H3 at 'Lys-36' (H3K36me2). Histone methyltransferase which specifically dimethylates nucleosomal histone H3 at 'Lys-36' (H3K36me2). Methylation of histone H3 at 'Lys-27' is controversial. Mono-, di- or tri-methylates histone H3 at 'Lys-27' (H3K27me, H3K27me2 and H3K27me3). Does not methylate histone H3 at 'Lys-27'. May act as a transcription regulator that binds DNA and suppresses IL5 transcription through HDAC recruitment. The polypeptide is Histone-lysine N-methyltransferase NSD2 (Homo sapiens (Human)).